Here is a 493-residue protein sequence, read N- to C-terminus: Aminotransferase swnA (493 aa).

The protein belongs to the class-I pyridoxal-phosphate-dependent aminotransferase family. Requires pyridoxal 5'-phosphate as cofactor.

It participates in mycotoxin biosynthesis. Aminotransferase; part of the gene cluster that mediates the biosynthesis of swainsonine (SW), a cytotoxic fungal alkaloid and a potential cancer therapy drug. Swainsonine production occurs via a multibranched pathway and is dispensable for fungal colonization of plants and infection of insect hosts. The first step of swainsonine biosynthesis is the production of the precursor pipecolic acid (PA) via conversion of L-lysine (Lys) to 1-piperideine-6-carboxylate (P6C) by the aminotransferase swnA, the latter being further reduced to PA by the reductase swnR. The PKS-NRPS hybrid synthetase swnK uptakes and condensates PA and malonyl-CoA with and without skipping of the ketoreductase (KR) domain in order to produce 3 intermediates, 1-oxoindolizidine, (1S)-1-hydroxyindolizin, and (1R)-1-hydroxyindolizine; with the transisomer (1S)-1-hydroxyindolizin being predominant. The terminal thioester reductase (TE) domain of swnK is involved in reduction of the thioester bond to release the intermediate aldehydes. The oxidoreductase swnN could contribute to the reduction of 1-oxoindolizidine to (1S)-1-hydroxyindolizin and (1R)-1-hydroxyindolizine, contributing to the major route of SW production. The dioxygenase swnH2 would be responsible for the oxidization of (1R)-1-hydroxyindolizine into (1R,2S)-1,2-dihydroxyindolizine and of (1S)-1-hydroxyindolizin to yield both (1R,2S)-1,2-dihydroxyindolizine and (1S,2S)-1,2-dihydroxyindolizine. The dioxygenase swnH1 then performs the conversion of the 1,2-dihydroxyindolizine epimers to SW. The polypeptide is Aminotransferase swnA (Arthroderma benhamiae (strain ATCC MYA-4681 / CBS 112371) (Trichophyton mentagrophytes)).